Consider the following 727-residue polypeptide: Synaptic vesicle glycoprotein 2C (727 aa).

Residues 1–57 (MEDSYKDRTSLMKGAKDIAREVKKQTVKKVNQAVDRAQDEYTQRSYSRFQDEEDDDD) are interaction with SYT1. Topologically, residues 1 to 154 (MEDSYKDRTS…CGHGRFQWAL (154 aa)) are cytoplasmic. Disordered stretches follow at residues 24–84 (KQTV…GHDE) and 109–128 (VGQP…SERR). S75 and S76 each carry phosphoserine. A Phosphothreonine modification is found at T79. Residues 113–128 (KGDEYKDRRELESERR) are compositionally biased toward basic and acidic residues. A helical transmembrane segment spans residues 155 to 175 (FFVLGMALMADGVEVFVVGFV). Residues 176 to 191 (LPSAETDLCIPNSGSG) lie on the Extracellular side of the membrane. A helical membrane pass occupies residues 192 to 212 (WLGSIVYLGMMVGAFFWGGLA). The Cytoplasmic segment spans residues 213-226 (DKVGRKQSLLICMS). A helical membrane pass occupies residues 227–247 (VNGFFAFLSSFVQGYGFFLFC). Residue R248 is a topological domain, extracellular. The chain crosses the membrane as a helical span at residues 249–269 (LLSGFGIGGAIPTVFSYFAEV). At 270-280 (LAREKRGEHLS) the chain is on the cytoplasmic side. A helical membrane pass occupies residues 281–301 (WLCMFWMIGGIYASAMAWAII). Topologically, residues 302 to 320 (PHYGWSFSMGSAYQFHSWR) are extracellular. The helical transmembrane segment at 321 to 341 (VFVIVCALPCVSSVVALTFMP) threads the bilayer. The Cytoplasmic segment spans residues 342-437 (ESPRFLLEVG…PVRDNTIKLT (96 aa)). A helical membrane pass occupies residues 438 to 458 (IVWFTLSFGYYGLSVWFPDVI). The Extracellular segment spans residues 459-578 (KPLQSDEYAL…CQITFDDDYS (120 aa)). Residue Y466 is modified to Phosphotyrosine. Residues N480, N484, N534, N559, and N565 are each glycosylated (N-linked (GlcNAc...) asparagine). A (Microbial infection) C.botulinum neurotoxin type A-binding region spans residues 519-563 (SCTFEDVTSVNTYFKNCTFIDTVFDNTDFEPYKFIDSEFKNCSFF). Residues 579 to 599 (AYWIYFVNFLGTLAVLPGNIV) traverse the membrane as a helical segment. Residues 600-609 (SALLMDRIGR) are Cytoplasmic-facing. The helical transmembrane segment at 610–630 (LTMLGGSMVLSGISCFFLWFG) threads the bilayer. Residues 631-636 (TSESMM) are Extracellular-facing. A helical transmembrane segment spans residues 637 to 657 (IGMLCLYNGLTISAWNSLDVV). The Cytoplasmic portion of the chain corresponds to 658–669 (TVELYPTDRRAT). Residues 670–690 (GFGFLNALCKAAAVLGNLIFG) traverse the membrane as a helical segment. The Extracellular portion of the chain corresponds to 691–698 (SLVSITKS). A helical transmembrane segment spans residues 699-719 (IPILLASTVLVCGGLVGLCLP). Residues 720–727 (DTRTQVLM) lie on the Cytoplasmic side of the membrane.

The protein belongs to the major facilitator superfamily. As to quaternary structure, interacts with SYT1 in a calcium-dependent manner. (Microbial infection) Interacts with C.botulinum neurotoxin type A1 and type A2 (BoNT/A, botA). Interaction is improved by glycosylation of SV2. Post-translationally, N-glycosylated. Upon expression in a kidney cell line the most abundant glycan on Asn-534 is GlcNAc(3)Hex(5), while on Asn-559 and Asn-565 the most abundant glycan is GlcNAc2Fuc1Man3GlcNAc3Gal3. Both Asn-559 and Asn-565 have a high degree of glycan heterogeneity.

Its subcellular location is the cytoplasmic vesicle. The protein localises to the secretory vesicle. The protein resides in the synaptic vesicle membrane. Functionally, plays a role in the control of regulated secretion in neural and endocrine cells, enhancing selectively low-frequency neurotransmission. Positively regulates vesicle fusion by maintaining the readily releasable pool of secretory vesicles. In terms of biological role, (Microbial infection) Receptor for C.botulinum neurotoxin type A (BoNT/A, botA); the toxin probably binds via extracellular loop 4. Recognition by BoNT/A relies on both protein-protein and protein-N-glycosylation; glycosylation of Asn-559 increases its affinity for BoNT/A. Also serves as a receptor for the closely related C.botulinum neurotoxin type A2; glycosylation is not essential but enhances the interaction. (Microbial infection) Possible receptor for C.botulinum neurotoxin type D (BoNT/D, botD); note that type D does not usually infect humans. This chain is Synaptic vesicle glycoprotein 2C (SV2C), found in Homo sapiens (Human).